The sequence spans 579 residues: Adenine deaminase (579 aa).

It belongs to the metallo-dependent hydrolases superfamily. Adenine deaminase family. It depends on Mn(2+) as a cofactor.

The catalysed reaction is adenine + H2O + H(+) = hypoxanthine + NH4(+). This is Adenine deaminase from Listeria monocytogenes serotype 4b (strain F2365).